The sequence spans 410 residues: Translation initiation factor 2 subunit gamma (410 aa).

The tr-type G domain maps to Gln6–Lys203. The segment at Gly15–Thr22 is G1. Residues Asp18, Thr22, Gly43, and Ser45 each coordinate Mg(2+). A GTP-binding site is contributed by Asp18 to Ser23. Positions Gly43–Arg47 are G2. The Zn(2+) site is built by Cys58, Cys61, Cys73, and Cys76. Residues Asp90–Gly93 form a G3 region. GTP is bound by residues Asn146–Asp149 and Ser181–His183. The G4 stretch occupies residues Asn146 to Asp149. Residues Ser181–His183 form a G5 region.

Belongs to the TRAFAC class translation factor GTPase superfamily. Classic translation factor GTPase family. EIF2G subfamily. As to quaternary structure, heterotrimer composed of an alpha, a beta and a gamma chain. It depends on Mg(2+) as a cofactor.

It carries out the reaction GTP + H2O = GDP + phosphate + H(+). Functionally, eIF-2 functions in the early steps of protein synthesis by forming a ternary complex with GTP and initiator tRNA. The sequence is that of Translation initiation factor 2 subunit gamma from Methanococcus vannielii (strain ATCC 35089 / DSM 1224 / JCM 13029 / OCM 148 / SB).